Consider the following 112-residue polypeptide: T cell receptor alpha variable 30 (112 aa).

A signal peptide spans 1-21 (METLLKVLSGTLLWQLTWVRS). In terms of domain architecture, Ig-like spans 24–112 (PVQSPQAVIL…YSGTYFCGTE (89 aa)). N42 carries N-linked (GlcNAc...) asparagine glycosylation. A disulfide bond links C43 and C109.

Alpha-beta TR is a heterodimer composed of an alpha and beta chain; disulfide-linked. The alpha-beta TR is associated with the transmembrane signaling CD3 coreceptor proteins to form the TR-CD3 (TcR or TCR). The assembly of alpha-beta TR heterodimers with CD3 occurs in the endoplasmic reticulum where a single alpha-beta TR heterodimer associates with one CD3D-CD3E heterodimer, one CD3G-CD3E heterodimer and one CD247 homodimer forming a stable octameric structure. CD3D-CD3E and CD3G-CD3E heterodimers preferentially associate with TR alpha and TR beta chains, respectively. The association of the CD247 homodimer is the last step of TcR assembly in the endoplasmic reticulum and is required for transport to the cell surface.

The protein localises to the cell membrane. In terms of biological role, v region of the variable domain of T cell receptor (TR) alpha chain that participates in the antigen recognition. Alpha-beta T cell receptors are antigen specific receptors which are essential to the immune response and are present on the cell surface of T lymphocytes. Recognize peptide-major histocompatibility (MH) (pMH) complexes that are displayed by antigen presenting cells (APC), a prerequisite for efficient T cell adaptive immunity against pathogens. Binding of alpha-beta TR to pMH complex initiates TR-CD3 clustering on the cell surface and intracellular activation of LCK that phosphorylates the ITAM motifs of CD3G, CD3D, CD3E and CD247 enabling the recruitment of ZAP70. In turn ZAP70 phosphorylates LAT, which recruits numerous signaling molecules to form the LAT signalosome. The LAT signalosome propagates signal branching to three major signaling pathways, the calcium, the mitogen-activated protein kinase (MAPK) kinase and the nuclear factor NF-kappa-B (NF-kB) pathways, leading to the mobilization of transcription factors that are critical for gene expression and essential for T cell growth and differentiation. The T cell repertoire is generated in the thymus, by V-(D)-J rearrangement. This repertoire is then shaped by intrathymic selection events to generate a peripheral T cell pool of self-MH restricted, non-autoaggressive T cells. Post-thymic interaction of alpha-beta TR with the pMH complexes shapes TR structural and functional avidity. In Homo sapiens (Human), this protein is T cell receptor alpha variable 30.